The following is a 243-amino-acid chain: MREKHYSEDNSRKRKRGELEHNSDLNETVLPSDWTPDPVKNFAADDDDEETKAKDATMVLPFVKKSPVWKIYESMEVFKRVPQSPHFSPLFEAKEDFREGFALGMMVTFSGVLEKVEDLKTDVPIRQLNSLKDSFTELEKHGFTVTAPLSRIAKLLALKDRQLKILEELKVFDKEMKDESSKKHKAEQEFGEMERKILEVKNKVLELQKQEAALEKQKDATYEKICKMESRARDLGVELEDVE.

Residues 1-24 show a composition bias toward basic and acidic residues; that stretch reads MREKHYSEDNSRKRKRGELEHNSD. The tract at residues 1-51 is disordered; sequence MREKHYSEDNSRKRKRGELEHNSDLNETVLPSDWTPDPVKNFAADDDDEET. Positions 59-243 constitute a DUF724 domain; it reads VLPFVKKSPV…DLGVELEDVE (185 aa). Positions 174–223 form a coiled coil; the sequence is KEMKDESSKKHKAEQEFGEMERKILEVKNKVLELQKQEAALEKQKDATYE.

Homodimer. Expressed in leaves, flowers and siliques.

Its subcellular location is the nucleus. In terms of biological role, may be involved in the polar growth of plant cells via transportation of RNAs. The sequence is that of DUF724 domain-containing protein 5 from Arabidopsis thaliana (Mouse-ear cress).